Consider the following 443-residue polypeptide: ATP-dependent protease ATPase subunit HslU (443 aa).

Residues isoleucine 18, 60-65, aspartate 256, glutamate 321, and arginine 393 each bind ATP; that span reads GVGKTE.

It belongs to the ClpX chaperone family. HslU subfamily. As to quaternary structure, a double ring-shaped homohexamer of HslV is capped on each side by a ring-shaped HslU homohexamer. The assembly of the HslU/HslV complex is dependent on binding of ATP.

The protein resides in the cytoplasm. In terms of biological role, ATPase subunit of a proteasome-like degradation complex; this subunit has chaperone activity. The binding of ATP and its subsequent hydrolysis by HslU are essential for unfolding of protein substrates subsequently hydrolyzed by HslV. HslU recognizes the N-terminal part of its protein substrates and unfolds these before they are guided to HslV for hydrolysis. The chain is ATP-dependent protease ATPase subunit HslU from Vibrio parahaemolyticus serotype O3:K6 (strain RIMD 2210633).